We begin with the raw amino-acid sequence, 88 residues long: U-scoloptoxin(01)-Tl1a (88 aa).

An N-terminal signal peptide occupies residues 1–16 (MSVYGLLSLLIFIVLA). In terms of domain architecture, Chitin-binding type-2 spans 25–81 (GKDCSEKEEYLYDSSNCDIFYECDESLKPQRMMCGPGTGWNQDKLVCDFLTNIDCTR). An intrachain disulfide couples Cys58 to Cys71.

Belongs to the scoloptoxin-01 family. In terms of processing, contains 3 disulfide bonds. Expressed by the venom gland.

The protein resides in the secreted. The sequence is that of U-scoloptoxin(01)-Tl1a from Thereuopoda longicornis (Long-legged centipede).